We begin with the raw amino-acid sequence, 297 residues long: 4-diphosphocytidyl-2-C-methyl-D-erythritol kinase (297 aa).

Residue Lys14 is part of the active site. 99 to 109 (PVAAGIGGGSA) serves as a coordination point for ATP. Asp141 is an active-site residue.

The protein belongs to the GHMP kinase family. IspE subfamily.

It catalyses the reaction 4-CDP-2-C-methyl-D-erythritol + ATP = 4-CDP-2-C-methyl-D-erythritol 2-phosphate + ADP + H(+). It functions in the pathway isoprenoid biosynthesis; isopentenyl diphosphate biosynthesis via DXP pathway; isopentenyl diphosphate from 1-deoxy-D-xylulose 5-phosphate: step 3/6. In terms of biological role, catalyzes the phosphorylation of the position 2 hydroxy group of 4-diphosphocytidyl-2C-methyl-D-erythritol. In Bradyrhizobium diazoefficiens (strain JCM 10833 / BCRC 13528 / IAM 13628 / NBRC 14792 / USDA 110), this protein is 4-diphosphocytidyl-2-C-methyl-D-erythritol kinase.